Here is a 102-residue protein sequence, read N- to C-terminus: RNA-binding protein Hfq (102 aa).

A Sm domain is found at 9-68 (DPFLNALRRERVPVSIYLVNGIKLQGQIESFDQFVILLKNTVSQMVYKHAISTVVPSRPV). Residues 63 to 102 (VPSRPVSHHSNNAGGGSNNYHHSNNAQPSSAASQDSEDAE) are disordered. The span at 70–96 (HHSNNAGGGSNNYHHSNNAQPSSAASQ) shows a compositional bias: low complexity.

The protein belongs to the Hfq family. As to quaternary structure, homohexamer.

Functionally, RNA chaperone that binds small regulatory RNA (sRNAs) and mRNAs to facilitate mRNA translational regulation in response to envelope stress, environmental stress and changes in metabolite concentrations. Also binds with high specificity to tRNAs. This is RNA-binding protein Hfq from Cronobacter sakazakii (strain ATCC BAA-894) (Enterobacter sakazakii).